The primary structure comprises 161 residues: Crossover junction endodeoxyribonuclease RuvC (161 aa).

Active-site residues include D7, E67, and D139. Positions 7, 67, and 139 each coordinate Mg(2+).

The protein belongs to the RuvC family. In terms of assembly, homodimer which binds Holliday junction (HJ) DNA. The HJ becomes 2-fold symmetrical on binding to RuvC with unstacked arms; it has a different conformation from HJ DNA in complex with RuvA. In the full resolvosome a probable DNA-RuvA(4)-RuvB(12)-RuvC(2) complex forms which resolves the HJ. Mg(2+) is required as a cofactor.

It localises to the cytoplasm. It carries out the reaction Endonucleolytic cleavage at a junction such as a reciprocal single-stranded crossover between two homologous DNA duplexes (Holliday junction).. The RuvA-RuvB-RuvC complex processes Holliday junction (HJ) DNA during genetic recombination and DNA repair. Endonuclease that resolves HJ intermediates. Cleaves cruciform DNA by making single-stranded nicks across the HJ at symmetrical positions within the homologous arms, yielding a 5'-phosphate and a 3'-hydroxyl group; requires a central core of homology in the junction. The consensus cleavage sequence is 5'-(A/T)TT(C/G)-3'. Cleavage occurs on the 3'-side of the TT dinucleotide at the point of strand exchange. HJ branch migration catalyzed by RuvA-RuvB allows RuvC to scan DNA until it finds its consensus sequence, where it cleaves and resolves the cruciform DNA. This is Crossover junction endodeoxyribonuclease RuvC from Syntrophotalea carbinolica (strain DSM 2380 / NBRC 103641 / GraBd1) (Pelobacter carbinolicus).